We begin with the raw amino-acid sequence, 371 residues long: Glutamate 5-kinase (371 aa).

Position 8 (lysine 8) interacts with ATP. Substrate is bound by residues serine 49, aspartate 136, and asparagine 149. ATP is bound by residues 169–170 and 213–219; these read TD and TGGMATK. The PUA domain occupies 278-356; that stretch reads TGKLILDDGA…EDIPQVLGYA (79 aa).

Belongs to the glutamate 5-kinase family.

It is found in the cytoplasm. It carries out the reaction L-glutamate + ATP = L-glutamyl 5-phosphate + ADP. Its pathway is amino-acid biosynthesis; L-proline biosynthesis; L-glutamate 5-semialdehyde from L-glutamate: step 1/2. Its function is as follows. Catalyzes the transfer of a phosphate group to glutamate to form L-glutamate 5-phosphate. This Acaryochloris marina (strain MBIC 11017) protein is Glutamate 5-kinase.